The following is a 382-amino-acid chain: Toluene efflux pump periplasmic linker protein TtgD (382 aa).

The signal sequence occupies residues 1-23 (MRLERALRARQLIPLAAIWLLVG). The N-palmitoyl cysteine moiety is linked to residue C24. Residue C24 is the site of S-diacylglycerol cysteine attachment. Residues 100-136 (YEALLARAEASLLTAQNLARRYERLLDTNAISQQQYD) adopt a coiled-coil conformation.

Belongs to the membrane fusion protein (MFP) (TC 8.A.1) family.

It localises to the cell inner membrane. Functionally, the periplasmic linker protein component of an inducible organic solvent efflux pump. Involved in export of toluene and styrene but not of m-xylene, propylbenzene or ethylbenzene. Is not involved in antibiotic or AMP efflux. This is Toluene efflux pump periplasmic linker protein TtgD (ttgD) from Pseudomonas putida (strain DOT-T1E).